The sequence spans 418 residues: Trimethyllysine dioxygenase, mitochondrial (418 aa).

Residues His239, Asp241, and His386 each coordinate Fe cation.

The protein belongs to the gamma-BBH/TMLD family. Homodimer. Fe(2+) is required as a cofactor. The cofactor is L-ascorbate.

Its subcellular location is the mitochondrion matrix. It catalyses the reaction N(6),N(6),N(6)-trimethyl-L-lysine + 2-oxoglutarate + O2 = (3S)-3-hydroxy-N(6),N(6),N(6)-trimethyl-L-lysine + succinate + CO2. It functions in the pathway amine and polyamine biosynthesis; carnitine biosynthesis. Functionally, converts trimethyllysine (TML) into hydroxytrimethyllysine (HTML). This is Trimethyllysine dioxygenase, mitochondrial (TMLHE) from Gallus gallus (Chicken).